A 284-amino-acid polypeptide reads, in one-letter code: uncharacterized protein (284 aa).

This is an uncharacterized protein from Streptomyces fradiae (Streptomyces roseoflavus).